A 310-amino-acid polypeptide reads, in one-letter code: Coproporphyrin III ferrochelatase (310 aa).

The Fe(2+) site is built by His-184 and Glu-265.

This sequence belongs to the ferrochelatase family.

The protein resides in the cytoplasm. The enzyme catalyses Fe-coproporphyrin III + 2 H(+) = coproporphyrin III + Fe(2+). It participates in porphyrin-containing compound metabolism; protoheme biosynthesis. Functionally, involved in coproporphyrin-dependent heme b biosynthesis. Catalyzes the insertion of ferrous iron into coproporphyrin III to form Fe-coproporphyrin III. This is Coproporphyrin III ferrochelatase from Limosilactobacillus reuteri (strain DSM 20016) (Lactobacillus reuteri).